Reading from the N-terminus, the 267-residue chain is MYLELVKKKSDILDKDGNRIKEVELPIIFSFPVRKDLIRRVFIAEFTHSLQPKGRDPNAGKRTSAESFGINLGMARVPRVKNSGEAALAPNTVGGRLAFPPSVNKKLAEEANVKEKRLAVISALSATADIAFVRARGHVFKDSVRFPIVVTDDIVNLKTTSEVEEFLKKIGVYDDVERVKERIRIRAGKGKMRGRKYKEPIGPLIIVHDSNSPIIKAARNLAGVDVVNAKDVSVIHLAPGAHPGRLTIYTESSIKILDERLSKRVVS.

The protein belongs to the universal ribosomal protein uL4 family. In terms of assembly, part of the 50S ribosomal subunit.

In terms of biological role, one of the primary rRNA binding proteins, this protein initially binds near the 5'-end of the 23S rRNA. It is important during the early stages of 50S assembly. It makes multiple contacts with different domains of the 23S rRNA in the assembled 50S subunit and ribosome. Functionally, forms part of the polypeptide exit tunnel. The polypeptide is Large ribosomal subunit protein uL4 (Saccharolobus solfataricus (strain ATCC 35092 / DSM 1617 / JCM 11322 / P2) (Sulfolobus solfataricus)).